The following is a 205-amino-acid chain: Low-density lipoprotein receptor class A domain-containing protein 1 (205 aa).

The helical transmembrane segment at 43-63 (LLLLLATVAALIALVTILGLP) threads the bilayer. One can recognise an LDL-receptor class A 1 domain in the interval 71–114 (ACITLTNRTGFLCHDQRSCIPASGVCDGVRTCTHGEDEDESLCR). 6 disulfides stabilise this stretch: C72-C89, C83-C102, C96-C113, C141-C160, C163-C180, and C170-C193. The region spanning 115–161 (DVPQSLPHFLVAHCGDPASWIYSDQKCDGTNNCGDCSDELSPVTVCP) is the LDL-receptor class A 2; atypical domain. Positions 162 to 203 (PCGPGWWRCPSTFFKYCDCIPRHLCRDHVQHCSDWSDEYACP) constitute an LDL-receptor class A 3; atypical domain.

It belongs to the LDLR family.

It is found in the membrane. This Homo sapiens (Human) protein is Low-density lipoprotein receptor class A domain-containing protein 1 (LDLRAD1).